Consider the following 273-residue polypeptide: APRWVYHLTSAWMVFVVIASVFTNGLVLAATMRFKKLRHPLNWILVNLAIADLVETIIASTISVVNQMYGYFVLGHPLCVVEGYTASLCGITGLWSLAIISWERWMVVCRPFGNVRFDAKLAIAGIAFSWIWAAVWTAPPIFGWSRYWPHGLKTSCGPDVFSGSSYPGVQSYMIVLMITCCFIPLSVIVLCYLQVWLAIRAVAKQQKESESTQKAEKEVTRMVMVMIFAFCLCWGPYAFFACFAAAHPGYAFHPLVAALPAYFAKSATIYNPI.

At 1–5 (APRWV) the chain is on the extracellular side. A helical transmembrane segment spans residues 6–30 (YHLTSAWMVFVVIASVFTNGLVLAA). The Cytoplasmic portion of the chain corresponds to 31–42 (TMRFKKLRHPLN). A helical membrane pass occupies residues 43 to 68 (WILVNLAIADLVETIIASTISVVNQM). Residues 69–82 (YGYFVLGHPLCVVE) lie on the Extracellular side of the membrane. C79 and C156 are oxidised to a cystine. Residues 83–102 (GYTASLCGITGLWSLAIISW) form a helical membrane-spanning segment. The Cytoplasmic segment spans residues 103-121 (ERWMVVCRPFGNVRFDAKL). The chain crosses the membrane as a helical span at residues 122-145 (AIAGIAFSWIWAAVWTAPPIFGWS). Over 146–171 (RYWPHGLKTSCGPDVFSGSSYPGVQS) the chain is Extracellular. A helical transmembrane segment spans residues 172 to 199 (YMIVLMITCCFIPLSVIVLCYLQVWLAI). The Cytoplasmic segment spans residues 200 to 221 (RAVAKQQKESESTQKAEKEVTR). Residues 222-245 (MVMVMIFAFCLCWGPYAFFACFAA) traverse the membrane as a helical segment. At 246–253 (AHPGYAFH) the chain is on the extracellular side. The chain crosses the membrane as a helical span at residues 254-273 (PLVAALPAYFAKSATIYNPI). K265 carries the N6-(retinylidene)lysine modification.

The protein belongs to the G-protein coupled receptor 1 family. Opsin subfamily. As to quaternary structure, monomer. Homodimer. Homotetramer. O-glycosylated. In terms of processing, phosphorylated on some or all of the serine and threonine residues present in the C-terminal region. As to expression, the three color pigments are found in the cone photoreceptor cells.

The protein resides in the membrane. Visual pigments are the light-absorbing molecules that mediate vision. They consist of an apoprotein, opsin, covalently linked to cis-retinal. In Odocoileus virginianus virginianus (Virginia white-tailed deer), this protein is Medium-wave-sensitive opsin 1 (OPN1MW).